Reading from the N-terminus, the 475-residue chain is U3 small nucleolar RNA-interacting protein 2 (475 aa).

The interval 1-75 is disordered; sequence MSATAAARKR…EEEEELEETA (75 aa). Positions 8-40 match the Nuclear localization signal motif; sequence RKRGKPASGAGAGAGAGKRRRKADSAGDRGKSK. An Omega-N-methylarginine modification is found at arginine 10. 2 positions are modified to N6-acetyllysine: lysine 12 and lysine 25. Phosphoserine is present on residues serine 50, serine 51, serine 53, and serine 57. The span at 65 to 74 shows a compositional bias: acidic residues; the sequence is EEEEEELEET. Lysine 113 is covalently cross-linked (Glycyl lysine isopeptide (Lys-Gly) (interchain with G-Cter in SUMO2)). WD repeat units lie at residues 144–183, 197–236, 239–278, 281–320, 322–360, 374–413, and 419–460; these read GHQL…KLHV, GHSS…HLYT, GHRD…YVET, GHQD…QLVF, GHQG…PLAL, EQPF…RQLD, and PLVG…NSVC.

The protein belongs to the WD repeat RRP9 family. Interacts specifically with the U3 small nucleolar RNA (U3 snoRNA). Binds a sub-fragment of the U3 snoRNA surrounding the B/C motif (3UBC). This association with the U3BC RNA is dependent on the binding of a protein called 15.5K to the box B/C motif. The association of the protein with the U3BC RNA was found to be also dependent on a conserved RNA structure that flanks the box B/C motif. Part of the small subunit (SSU) processome, composed of more than 70 proteins and the RNA chaperone small nucleolar RNA (snoRNA) U3. In terms of processing, acetylation at Lys-12 and Lys-25 by KAT2B/PCAF under stress impairs pre-rRNA processing. Deacetylation by SIRT7 enhances RRP9-binding to U3 snoRNA, which is a prerequisite for pre-rRNA processing.

It is found in the nucleus. It localises to the nucleolus. Its function is as follows. Component of a nucleolar small nuclear ribonucleoprotein particle (snoRNP) thought to participate in the processing and modification of pre-ribosomal RNA (pre-rRNA). Part of the small subunit (SSU) processome, first precursor of the small eukaryotic ribosomal subunit. During the assembly of the SSU processome in the nucleolus, many ribosome biogenesis factors, an RNA chaperone and ribosomal proteins associate with the nascent pre-rRNA and work in concert to generate RNA folding, modifications, rearrangements and cleavage as well as targeted degradation of pre-ribosomal RNA by the RNA exosome. The chain is U3 small nucleolar RNA-interacting protein 2 from Homo sapiens (Human).